The sequence spans 570 residues: Mitogen-activated protein kinase 11 (570 aa).

Residues Y26–F317 form the Protein kinase domain. Residues I32–V40 and K55 contribute to the ATP site. Residue D152 is the Proton acceptor of the active site. Position 188 is a phosphothreonine (T188). The TXY motif lies at T188–Y190. The residue at position 190 (Y190) is a Phosphotyrosine.

It belongs to the protein kinase superfamily. CMGC Ser/Thr protein kinase family. MAP kinase subfamily. Post-translationally, dually phosphorylated on Thr-188 and Tyr-190, which activates the enzyme.

The enzyme catalyses L-seryl-[protein] + ATP = O-phospho-L-seryl-[protein] + ADP + H(+). It carries out the reaction L-threonyl-[protein] + ATP = O-phospho-L-threonyl-[protein] + ADP + H(+). Activated by threonine and tyrosine phosphorylation. The sequence is that of Mitogen-activated protein kinase 11 (MPK11) from Oryza sativa subsp. japonica (Rice).